The sequence spans 446 residues: NADH-quinone oxidoreductase subunit D (446 aa).

It belongs to the complex I 49 kDa subunit family. NDH-1 is composed of 14 different subunits. Subunits NuoB, C, D, E, F, and G constitute the peripheral sector of the complex.

The protein localises to the cell membrane. The catalysed reaction is a quinone + NADH + 5 H(+)(in) = a quinol + NAD(+) + 4 H(+)(out). Its function is as follows. NDH-1 shuttles electrons from NADH, via FMN and iron-sulfur (Fe-S) centers, to quinones in the respiratory chain. The immediate electron acceptor for the enzyme in this species is believed to be a menaquinone. Couples the redox reaction to proton translocation (for every two electrons transferred, four hydrogen ions are translocated across the cytoplasmic membrane), and thus conserves the redox energy in a proton gradient. The polypeptide is NADH-quinone oxidoreductase subunit D (Mycobacterium sp. (strain JLS)).